Reading from the N-terminus, the 395-residue chain is Elongation factor Tu (395 aa).

The 195-residue stretch at 10–204 folds into the tr-type G domain; it reads KPHVNIGTIG…AVDNYIPHPV (195 aa). Residues 19–26 form a G1 region; the sequence is GHVDHGKT. GTP is bound at residue 19–26; it reads GHVDHGKT. Residue T26 participates in Mg(2+) binding. A G2 region spans residues 60-64; it reads GITIS. The interval 81–84 is G3; that stretch reads DCPG. Residues 81–85 and 136–139 each bind GTP; these read DCPGH and NKVD. Residues 136-139 form a G4 region; sequence NKVD. The tract at residues 174 to 176 is G5; the sequence is SAL.

It belongs to the TRAFAC class translation factor GTPase superfamily. Classic translation factor GTPase family. EF-Tu/EF-1A subfamily. As to quaternary structure, monomer.

It is found in the cytoplasm. It catalyses the reaction GTP + H2O = GDP + phosphate + H(+). In terms of biological role, GTP hydrolase that promotes the GTP-dependent binding of aminoacyl-tRNA to the A-site of ribosomes during protein biosynthesis. The sequence is that of Elongation factor Tu from Rickettsia akari (strain Hartford).